A 279-amino-acid chain; its full sequence is Monoacylglycerol lipase (279 aa).

The Nucleophile role is filled by Ser110. Residues Asp226 and His256 each act as charge relay system in the active site.

The protein belongs to the AB hydrolase superfamily. Monomer.

It localises to the secreted. The protein resides in the cell wall. The enzyme catalyses a 1-acylglycerol + H2O = glycerol + a fatty acid + H(+). The catalysed reaction is Hydrolyzes glycerol monoesters of long-chain fatty acids.. It carries out the reaction 1-butyrylglycerol + H2O = butanoate + glycerol + H(+). It catalyses the reaction 1-octanoylglycerol + H2O = octanoate + glycerol + H(+). The enzyme catalyses 1-decanoylglycerol + H2O = decanoate + glycerol + H(+). The catalysed reaction is 1-dodecanoylglycerol + H2O = dodecanoate + glycerol + H(+). It carries out the reaction 1-tetradecanoylglycerol + H2O = tetradecanoate + glycerol + H(+). It catalyses the reaction 1-(9Z-octadecenoyl)-glycerol + H2O = glycerol + (9Z)-octadecenoate + H(+). The enzyme catalyses 2-(9Z-octadecenoyl)-glycerol + H2O = glycerol + (9Z)-octadecenoate + H(+). With respect to regulation, inhibited by the serine esterase inhibitors PMSF (100%), E600 (80%) and THL (22%). Virtual screening identified a tautomer of ZINC13451138, known inhibitor for HIV-1 integrase, as a potential inhibitor. In terms of biological role, involved in the hydrolysis of exogenous host lipids during chronic infection. Catalyzes the hydrolysis of both monoacylglycerols (MAG) and diacylglycerols (DAG), with a preference for MAG. It hydrolyzes 2-MAG, 1-3-MAG and MAG with short, medium and long chain fatty acids such as 1-monobutyroyl-rac-glycerol (MC4), 1-mono-octanoyl-rac-glycerol (MC8), 1-monodecanoyl-rac-glycerol (MC10), 1-monolauroyl-rac-glycerol (MC12), 1-monomyristoyl-rac-glycerol (MC14) and 1-mono-oleyl-rac-glycerol (MC18:1). Also able to hydrolyze DAG with short (DiC6) and medium (DiC10) fatty acid chains, but not with longest fatty acid chains. Can also hydrolyze vinyl laurate (VC12), vinyl butyrate (VC4) and vinyl propionate (VC3). Its function is as follows. Induces an inflammatory response and cell apoptosis in the host cells. Increases expression of IL-6, NF-kappaB, TLR-2, TLR-6, TNF-alpha, and MyD88 in mouse alveolar macrophage RAW264.7 cells. Persistent expression induces RAW264.7 cell apoptosis in vitro. The protein is Monoacylglycerol lipase of Mycobacterium tuberculosis (strain ATCC 25618 / H37Rv).